The following is a 197-amino-acid chain: Transcription factor FapR (197 aa).

This sequence belongs to the FapR family.

Its function is as follows. Transcriptional factor involved in regulation of membrane lipid biosynthesis by repressing genes involved in fatty acid and phospholipid metabolism. This Bacillus cereus (strain 03BB102) protein is Transcription factor FapR.